We begin with the raw amino-acid sequence, 348 residues long: Secreted frizzled-related protein 4 (348 aa).

A signal peptide spans methionine 1–glycine 18. The FZ domain occupies valine 19–proline 139. 5 disulfide bridges follow: cysteine 24/cysteine 85, cysteine 32/cysteine 78, cysteine 69/cysteine 108, cysteine 97/cysteine 136, and cysteine 101/cysteine 125. Residues asparagine 38 and asparagine 68 are each glycosylated (N-linked (GlcNAc...) asparagine). N-linked (GlcNAc...) asparagine glycosylation is found at asparagine 116, asparagine 194, and asparagine 240. Residues cysteine 178–arginine 296 form the NTR domain. Residues glutamate 289–glutamine 303 are compositionally biased toward basic and acidic residues. Positions glutamate 289–serine 348 are disordered. The segment covering lysine 330 to serine 348 has biased composition (basic residues).

It belongs to the secreted frizzled-related protein (sFRP) family. Expressed in the involuting mammary gland, ovarian corpus luteum and prostate. In ovaries, low levels found in granulosa cells. High levels in corpora lutea of pregnant animals.

The protein resides in the secreted. In terms of biological role, soluble frizzled-related proteins (sFRPS) function as modulators of Wnt signaling through direct interaction with Wnts. They have a role in regulating cell growth and differentiation in specific cell types. SFRP4 plays a role in bone morphogenesis. May also act as a regulator of adult uterine morphology and function. May also increase apoptosis during ovulation possibly through modulation of FZ1/FZ4/WNT4 signaling. Has phosphaturic effects by specifically inhibiting sodium-dependent phosphate uptake. This Rattus norvegicus (Rat) protein is Secreted frizzled-related protein 4 (Sfrp4).